Consider the following 560-residue polypeptide: Ribonuclease J 1 (560 aa).

Histidine 76, histidine 78, aspartate 80, histidine 81, histidine 144, and aspartate 166 together coordinate Zn(2+). Residue 366–370 (HTSGH) participates in substrate binding. Position 392 (histidine 392) interacts with Zn(2+).

The protein belongs to the metallo-beta-lactamase superfamily. RNA-metabolizing metallo-beta-lactamase-like family. Bacterial RNase J subfamily. As to quaternary structure, homodimer, may be a subunit of the RNA degradosome. Requires Zn(2+) as cofactor.

It is found in the cytoplasm. In terms of biological role, an RNase that has 5'-3' exonuclease and possibly endonuclease activity. Involved in maturation of rRNA and in some organisms also mRNA maturation and/or decay. Has an overlapping but not completely redundant role with RNase J2 in the decay of mRNA. The protein is Ribonuclease J 1 of Streptococcus pyogenes serotype M3 (strain ATCC BAA-595 / MGAS315).